The following is a 471-amino-acid chain: Sulfate adenylyltransferase subunit 1 (471 aa).

The region spanning 22–237 is the tr-type G domain; sequence KELLRFLTCG…LESVQITGAK (216 aa). A G1 region spans residues 31–38; sequence GSVDDGKS. Residue 31-38 participates in GTP binding; that stretch reads GSVDDGKS. The tract at residues 89 to 93 is G2; the sequence is GITID. Positions 110–113 are G3; that stretch reads DTPG. Residues 110 to 114 and 165 to 168 each bind GTP; these read DTPGH and NKMD. Residues 165-168 form a G4 region; that stretch reads NKMD. The segment at 202 to 204 is G5; the sequence is SAL.

The protein belongs to the TRAFAC class translation factor GTPase superfamily. Classic translation factor GTPase family. CysN/NodQ subfamily. Heterodimer composed of CysD, the smaller subunit, and CysN.

It catalyses the reaction sulfate + ATP + H(+) = adenosine 5'-phosphosulfate + diphosphate. It functions in the pathway sulfur metabolism; hydrogen sulfide biosynthesis; sulfite from sulfate: step 1/3. Functionally, with CysD forms the ATP sulfurylase (ATPS) that catalyzes the adenylation of sulfate producing adenosine 5'-phosphosulfate (APS) and diphosphate, the first enzymatic step in sulfur assimilation pathway. APS synthesis involves the formation of a high-energy phosphoric-sulfuric acid anhydride bond driven by GTP hydrolysis by CysN coupled to ATP hydrolysis by CysD. This Saccharophagus degradans (strain 2-40 / ATCC 43961 / DSM 17024) protein is Sulfate adenylyltransferase subunit 1.